We begin with the raw amino-acid sequence, 584 residues long: UBX domain-containing protein 2 (584 aa).

At 1-80 (MPVVNHEDSE…PTQTSTPMAE (80 aa)) the chain is on the cytoplasmic side. Residues 81–101 (TLVPPALGPRPLLFTASLPVV) form a helical membrane-spanning segment. Residues 102 to 151 (RPLPANFRNDFRTIGLNGRSNTVWSMFESFSYDGNPFLFILLLIPRIINR) lie on the Lumenal side of the membrane. Residues 152–172 (LSATIFTFFCTLLSLHSISGG) form a helical membrane-spanning segment. Over 173–584 (GNSGKPKISK…DEEDEENEEQ (412 aa)) the chain is Cytoplasmic. Residues 426–570 (ETTGKQATLQ…WPNGSLLVEA (145 aa)) form the UBX domain.

In terms of assembly, component of the DOA10 ubiquitin ligase complex which contains E3 ligase SSM4/DOA10 and CDC48-binding protein UBX2/SEL1. Component of the HRD1 ubiquitin ligase complex which contains the E3 ligase HRD1, its cofactors HRD3, USA1 and DER1, substrate recruiting factor YOS9 and UBX2. In ERAD-L, HRD3 and YOS9 jointly bind misfolded glycoproteins in the endoplasmic reticulum (ER) lumen. Movement of ERAD-L substrates through the ER membrane is facilitated by HRD1 and DER1 which have lateral gates facing each other and which distort the membrane region between the lateral gates, making it much thinner than a normal phospholipid bilayer. Substrates insert into the membrane as a hairpin loop with one strand interacting with DER1 and the other with HRD1. Both the DOA10 and HRD1 ubiquitin ligase complexes interact with the heterotrimeric CDC48-NPL4-UFD1 ATPase complex which is recruited by UBX2 via its interaction with CDC48 and which moves ubiquitinated substrates to the cytosol for targeting to the proteasome.

The protein resides in the endoplasmic reticulum membrane. Integral endoplasmic reticulum membrane protein that coordinates the assembly of the ER-associated protein degradation (ERAD) machinery at the ER membrane. Mediates binding of CDC48 to the E3 ubiquitin ligases SSM4/DOA10 and HRD1, and to ERAD substrates. Component of the DOA10 ubiquitin ligase complex, which is part of the ERAD-C pathway responsible for the rapid degradation of membrane proteins with misfolded cytoplasmic domains. ERAD-C substrates are ubiquitinated through DOA10 in conjunction with the E2 ubiquitin-conjugating enzymes UBC6 and UBC7-CUE1. Also a component of the HRD1 ubiquitin ligase complex, which is part of the ERAD-L and ERAD-M pathways responsible for the rapid degradation of soluble lumenal and membrane proteins with misfolded lumenal domains (ERAD-L), or ER-membrane proteins with misfolded transmembrane domains (ERAD-M). ERAD-L substrates are ubiquitinated through HRD1 in conjunction with the E2 ubiquitin-conjugating enzymes UBC1 and UBC7-CUE1. Ubiquitinated substrates are then removed to the cytosol via the action of the CDC48-NPL4-UFD1 ATPase complex and targeted to the proteasome. The polypeptide is UBX domain-containing protein 2 (UBX2) (Saccharomyces cerevisiae (strain ATCC 204508 / S288c) (Baker's yeast)).